The primary structure comprises 600 residues: Sulfite reductase [NADPH] flavoprotein alpha-component (600 aa).

The region spanning 63–201 (ITLISASQTG…VADQWRKQLT (139 aa)) is the Flavodoxin-like domain. Residues 69 to 74 (SQTGNA), 116 to 119 (STQG), and 152 to 161 (LGDTSYERFC) each bind FMN. The FAD-binding FR-type domain occupies 235-449 (QAPLTAALAT…IEHNDNFRLP (215 aa)). FAD is bound by residues Thr323, His357, 387–390 (RLYS), 405–407 (TVG), Tyr411, and 420–423 (GGAS). NADP(+)-binding positions include 520–521 (SR), 526–530 (KIYVQ), and Asp562. Tyr600 contributes to the FAD binding site.

Belongs to the NADPH-dependent sulphite reductase flavoprotein subunit CysJ family. It in the N-terminal section; belongs to the flavodoxin family. This sequence in the C-terminal section; belongs to the flavoprotein pyridine nucleotide cytochrome reductase family. As to quaternary structure, alpha(8)-beta(8). The alpha component is a flavoprotein, the beta component is a hemoprotein. The cofactor is FAD. Requires FMN as cofactor.

It catalyses the reaction hydrogen sulfide + 3 NADP(+) + 3 H2O = sulfite + 3 NADPH + 4 H(+). Its pathway is sulfur metabolism; hydrogen sulfide biosynthesis; hydrogen sulfide from sulfite (NADPH route): step 1/1. Functionally, component of the sulfite reductase complex that catalyzes the 6-electron reduction of sulfite to sulfide. This is one of several activities required for the biosynthesis of L-cysteine from sulfate. The flavoprotein component catalyzes the electron flow from NADPH -&gt; FAD -&gt; FMN to the hemoprotein component. This Photorhabdus laumondii subsp. laumondii (strain DSM 15139 / CIP 105565 / TT01) (Photorhabdus luminescens subsp. laumondii) protein is Sulfite reductase [NADPH] flavoprotein alpha-component.